A 133-amino-acid chain; its full sequence is Small ribosomal subunit protein uS8 (133 aa).

This sequence belongs to the universal ribosomal protein uS8 family. In terms of assembly, part of the 30S ribosomal subunit. Contacts proteins S5 and S12.

Its function is as follows. One of the primary rRNA binding proteins, it binds directly to 16S rRNA central domain where it helps coordinate assembly of the platform of the 30S subunit. The polypeptide is Small ribosomal subunit protein uS8 (Deinococcus deserti (strain DSM 17065 / CIP 109153 / LMG 22923 / VCD115)).